The chain runs to 101 residues: MIPGEILTDDGEHELNAGRATITLVVANTGDRPVQVGSHYHFYEVNDALAFDREAARGFRLNIAAGTAVRFEPGQTRTVELVALAGDRVVYGFQGKVMGPL.

The protein belongs to the urease beta subunit family. Heterotrimer of UreA (gamma), UreB (beta) and UreC (alpha) subunits. Three heterotrimers associate to form the active enzyme.

It localises to the cytoplasm. The enzyme catalyses urea + 2 H2O + H(+) = hydrogencarbonate + 2 NH4(+). Its pathway is nitrogen metabolism; urea degradation; CO(2) and NH(3) from urea (urease route): step 1/1. The protein is Urease subunit beta of Burkholderia multivorans (strain ATCC 17616 / 249).